The chain runs to 1018 residues: Contactin-1 (1018 aa).

An N-terminal signal peptide occupies residues 1-20; that stretch reads MKMWLLVSHLVIISITTCLA. 6 consecutive Ig-like C2-type domains span residues 41–131, 137–223, 241–326, 331–407, 413–500, and 504–601; these read PIFE…ATLS, PFPP…KSVF, PADI…ARIY, PEWV…AELK, PTFE…GTLV, and PTRI…LVVR. 2 cysteine pairs are disulfide-bonded: Cys-65–Cys-114 and Cys-158–Cys-211. N-linked (GlcNAc...) asparagine glycosylation is found at Asn-208 and Asn-258. Cysteines 263 and 310 form a disulfide. The N-linked (GlcNAc...) asparagine glycan is linked to Asn-338. 2 disulfide bridges follow: Cys-352/Cys-391 and Cys-436/Cys-484. 2 N-linked (GlcNAc...) asparagine glycosylation sites follow: Asn-457 and Asn-473. The N-linked (GlcNAc...) (complex) asparagine glycan is linked to Asn-494. Asn-521 is a glycosylation site (N-linked (GlcNAc...) asparagine). Cys-526 and Cys-583 are disulfide-bonded. An N-linked (GlcNAc...) asparagine glycan is attached at Asn-591. 4 consecutive Fibronectin type-III domains span residues 606–704, 709–806, 811–906, and 907–1000; these read PPGG…TDGA, APSD…SAQD, APTE…APPS, and QPPR…TLSP. The tract at residues 693-717 is disordered; it reads SIPSNRIKTDGAAPNVAPSDVGGGG. N-linked (GlcNAc...) asparagine glycosylation occurs at Asn-933. The GPI-anchor amidated serine moiety is linked to residue Ser-993. Residues 994-1018 constitute a propeptide, removed in mature form; sequence GAPTLSPSLLGLLLPAFGILVYLEF.

The protein belongs to the immunoglobulin superfamily. Contactin family. As to quaternary structure, monomer. Interacts with CNTNAP1 in cis form. Binds to the carbonic-anhydrase like domain of PTPRZ1. Interacts with NOTCH1 and TNR. Detected in a complex with NRCAM and PTPRB. Interacts with TASOR. As to expression, strongly expressed in brain and in neuroblastoma and retinoblastoma cell lines. Lower levels of expression in lung, pancreas, kidney and skeletal muscle.

The protein resides in the cell membrane. In terms of biological role, contactins mediate cell surface interactions during nervous system development. Involved in the formation of paranodal axo-glial junctions in myelinated peripheral nerves and in the signaling between axons and myelinating glial cells via its association with CNTNAP1. Participates in oligodendrocytes generation by acting as a ligand of NOTCH1. Its association with NOTCH1 promotes NOTCH1 activation through the released notch intracellular domain (NICD) and subsequent translocation to the nucleus. Interaction with TNR induces a repulsion of neurons and an inhibition of neurite outgrowth. In Homo sapiens (Human), this protein is Contactin-1 (CNTN1).